A 557-amino-acid polypeptide reads, in one-letter code: TGF-beta receptor type-2 (557 aa).

An N-terminal signal peptide occupies residues 1-23 (MPPRLRPLLLRVSLWVLVGSSSP). The Extracellular portion of the chain corresponds to 24-155 (ALLHDRSKEN…KPEEKDEISK (132 aa)). 6 disulfides stabilise this stretch: cysteine 41–cysteine 74, cysteine 44–cysteine 61, cysteine 51–cysteine 57, cysteine 67–cysteine 91, cysteine 111–cysteine 126, and cysteine 128–cysteine 133. Residues asparagine 62 and asparagine 84 are each glycosylated (N-linked (GlcNAc...) asparagine). The chain crosses the membrane as a helical span at residues 156-176 (VTIISLVPLLVISVAVIVIFY). Residues 177–557 (AYRTHKKRKL…PEDGSVTTAK (381 aa)) lie on the Cytoplasmic side of the membrane. Residues 234-537 (IELDIVVGKG…FSEFKHHDKL (304 aa)) form the Protein kinase domain. ATP is bound by residues 240–248 (VGKGRFAEV) and lysine 267. Aspartate 369 (proton acceptor) is an active-site residue.

It belongs to the protein kinase superfamily. TKL Ser/Thr protein kinase family. TGFB receptor subfamily. In terms of assembly, heterohexamer; TGFB1, TGFB2 and TGFB3 homodimeric ligands assemble a functional receptor composed of two TGFBR1 and TGFBR2 heterodimers to form a ligand-receptor heterohexamer. Mg(2+) serves as cofactor. Mn(2+) is required as a cofactor. In terms of processing, phosphorylated on a Ser/Thr residue in the cytoplasmic domain. In terms of tissue distribution, detected at low levels in embryonic heart, brain and lung. Detected at high levels in hatchling heart and lung.

Its subcellular location is the cell membrane. It localises to the membrane raft. The catalysed reaction is L-threonyl-[receptor-protein] + ATP = O-phospho-L-threonyl-[receptor-protein] + ADP + H(+). It carries out the reaction L-seryl-[receptor-protein] + ATP = O-phospho-L-seryl-[receptor-protein] + ADP + H(+). In terms of biological role, transmembrane serine/threonine kinase forming with the TGF-beta type I serine/threonine kinase receptor, TGFBR1, the non-promiscuous receptor for the TGF-beta cytokines TGFB1, TGFB2 and TGFB3. Transduces the TGFB1, TGFB2 and TGFB3 signal from the cell surface to the cytoplasm and is thus regulating a plethora of physiological and pathological processes including cell cycle arrest in epithelial and hematopoietic cells, control of mesenchymal cell proliferation and differentiation, wound healing, extracellular matrix production, immunosuppression and carcinogenesis. The formation of the receptor complex composed of 2 TGFBR1 and 2 TGFBR2 molecules symmetrically bound to the cytokine dimer results in the phosphorylation and the activation of TGFRB1 by the constitutively active TGFBR2. Activated TGFBR1 phosphorylates SMAD2 which dissociates from the receptor and interacts with SMAD4. The SMAD2-SMAD4 complex is subsequently translocated to the nucleus where it modulates the transcription of the TGF-beta-regulated genes. This constitutes the canonical SMAD-dependent TGF-beta signaling cascade. Also involved in non-canonical, SMAD-independent TGF-beta signaling pathways. This is TGF-beta receptor type-2 (TGFBR2) from Gallus gallus (Chicken).